The chain runs to 363 residues: NAD(P)H-quinone oxidoreductase subunit 1, chloroplastic (363 aa).

6 helical membrane-spanning segments follow: residues 28–48, 98–118, 127–147, 248–268, 300–320, and 343–363; these read WVLV…LVIV, FSIG…VIPF, LPIG…GLLM, YSGI…LVSS, VFGM…FLFI, and FLLP…LFSL.

This sequence belongs to the complex I subunit 1 family. NDH is composed of at least 16 different subunits, 5 of which are encoded in the nucleus.

The protein localises to the plastid. The protein resides in the chloroplast thylakoid membrane. It catalyses the reaction a plastoquinone + NADH + (n+1) H(+)(in) = a plastoquinol + NAD(+) + n H(+)(out). It carries out the reaction a plastoquinone + NADPH + (n+1) H(+)(in) = a plastoquinol + NADP(+) + n H(+)(out). In terms of biological role, NDH shuttles electrons from NAD(P)H:plastoquinone, via FMN and iron-sulfur (Fe-S) centers, to quinones in the photosynthetic chain and possibly in a chloroplast respiratory chain. The immediate electron acceptor for the enzyme in this species is believed to be plastoquinone. Couples the redox reaction to proton translocation, and thus conserves the redox energy in a proton gradient. The sequence is that of NAD(P)H-quinone oxidoreductase subunit 1, chloroplastic from Cucumis sativus (Cucumber).